A 400-amino-acid chain; its full sequence is Zinc finger CCHC domain-containing protein 3 (400 aa).

A disordered region spans residues 1–157; sequence MATGGGAEEE…LQDEPPAAGP (157 aa). Composition is skewed to basic and acidic residues over residues 26–38 and 47–63; these read ARVE…REKM and LAEK…RDET. A compositionally biased stretch (gly residues) spans 66–75; the sequence is GASGGLGSPG. The segment covering 91–109 has biased composition (basic and acidic residues); that stretch reads GDPKGRRRDPTGEASDAYR. Position 198 is a phosphotyrosine (Y198). CCHC-type zinc fingers lie at residues 349 to 365 and 369 to 384; these read RCFR…YCRK and CNLC…QCPK.

As to quaternary structure, interacts with CGAS. Interacts with RIGI. Interacts with IFIH1/MDA5.

Its subcellular location is the cytoplasm. In terms of biological role, nucleic acid-binding protein involved in innate immune response to DNA and RNA viruses. Binds DNA and RNA in the cytoplasm and acts by promoting recognition of viral nucleic acids by virus sensors, such as RIGI, IFIH1/MDA5 and CGAS. Acts as a co-sensor for recognition of double-stranded DNA (dsDNA) by cGAS in the cytoplasm, thereby playing a role in innate immune response to cytosolic dsDNA and DNA virus. Binds dsDNA and probably acts by promoting sensing of dsDNA by CGAS, leading to enhance CGAS oligomerization and activation. Promotes sensing of viral RNA by RIG-I-like receptors proteins RIGI and IFIH1/MDA5 via two mechanisms: binds double-stranded RNA (dsRNA), enhancing the binding of RIGI and IFIH1/MDA5 to dsRNA and promotes 'Lys-63'-linked ubiquitination and subsequent activation of RIGI and IFIH1/MDA5. The sequence is that of Zinc finger CCHC domain-containing protein 3 from Mus musculus (Mouse).